The following is a 431-amino-acid chain: Histidinol dehydrogenase (431 aa).

Y127, Q189, and N212 together coordinate NAD(+). Positions 237, 259, and 262 each coordinate substrate. Residues Q259 and H262 each coordinate Zn(2+). Residues E326 and H327 each act as proton acceptor in the active site. Residues H327, D360, E414, and H419 each contribute to the substrate site. Residue D360 coordinates Zn(2+). Position 419 (H419) interacts with Zn(2+).

It belongs to the histidinol dehydrogenase family. The cofactor is Zn(2+).

The enzyme catalyses L-histidinol + 2 NAD(+) + H2O = L-histidine + 2 NADH + 3 H(+). The protein operates within amino-acid biosynthesis; L-histidine biosynthesis; L-histidine from 5-phospho-alpha-D-ribose 1-diphosphate: step 9/9. Catalyzes the sequential NAD-dependent oxidations of L-histidinol to L-histidinaldehyde and then to L-histidine. This chain is Histidinol dehydrogenase, found in Xanthomonas euvesicatoria pv. vesicatoria (strain 85-10) (Xanthomonas campestris pv. vesicatoria).